The sequence spans 341 residues: tRNA N6-adenosine threonylcarbamoyltransferase (341 aa).

Fe cation-binding residues include H112 and H116. Substrate is bound by residues 138–142 (TVSGG), D171, G184, D188, and N279. Residue D307 participates in Fe cation binding.

It belongs to the KAE1 / TsaD family. It depends on Fe(2+) as a cofactor.

It is found in the cytoplasm. The catalysed reaction is L-threonylcarbamoyladenylate + adenosine(37) in tRNA = N(6)-L-threonylcarbamoyladenosine(37) in tRNA + AMP + H(+). Functionally, required for the formation of a threonylcarbamoyl group on adenosine at position 37 (t(6)A37) in tRNAs that read codons beginning with adenine. Is involved in the transfer of the threonylcarbamoyl moiety of threonylcarbamoyl-AMP (TC-AMP) to the N6 group of A37, together with TsaE and TsaB. TsaD likely plays a direct catalytic role in this reaction. This Riemerella anatipestifer (Moraxella anatipestifer) protein is tRNA N6-adenosine threonylcarbamoyltransferase.